Reading from the N-terminus, the 586-residue chain is Estrogen receptor (586 aa).

A modulating region spans residues 1-179; sequence MTMPLPNKTT…SMESTKETRY (179 aa). The tract at residues 144 to 173 is disordered; the sequence is FYRSSSDNRRQSGRERMSSANDKGPPSMES. The segment covering 149 to 160 has biased composition (basic and acidic residues); the sequence is SDNRRQSGRERM. 2 consecutive NR C4-type zinc fingers follow at residues 180–200 and 216–240; these read CAVCSDYASGYHYGVWSCEGC and CPATNQCTIDKNRRKSCQACRLRKC. Residues 180–245 constitute a DNA-binding region (nuclear receptor); the sequence is CAVCSDYASG…RLRKCYEVGM (66 aa). Positions 246-302 are hinge; it reads MKGGIRKDRRGGRLLKHKRQKEEQEQKNDVDPSEIRTASIWVNPSVKSMKLSPVLSL. The span at 252-264 shows a compositional bias: basic residues; it reads KDRRGGRLLKHKR. The segment at 252–276 is disordered; it reads KDRRGGRLLKHKRQKEEQEQKNDVD. Residues 265–276 show a composition bias toward basic and acidic residues; it reads QKEEQEQKNDVD. In terms of domain architecture, NR LBD spans 303-539; that stretch reads TAEQLISALM…DLLLEMLDAH (237 aa). Over residues 543–556 the composition is skewed to basic and acidic residues; it reads TPKDKTTTQEEDSR. The tract at residues 543 to 569 is disordered; the sequence is TPKDKTTTQEEDSRSPPTTTVNGASPC.

Belongs to the nuclear hormone receptor family. NR3 subfamily. In terms of assembly, binds DNA as a homodimer. Can form a heterodimer with ER-beta.

Its subcellular location is the nucleus. Functionally, the steroid hormones and their receptors are involved in the regulation of eukaryotic gene expression and affect cellular proliferation and differentiation in target tissues. This is Estrogen receptor (esr1) from Xenopus laevis (African clawed frog).